A 618-amino-acid polypeptide reads, in one-letter code: Manganese lipoxygenase (618 aa).

An N-terminal signal peptide occupies residues 1–16 (MRSRILAIVFAARHVA). Residues 36–45 (SSTTVLPSPT) show a composition bias toward low complexity. A disordered region spans residues 36-58 (SSTTVLPSPTQYTLPNNDPNQGA). Residues 46–58 (QYTLPNNDPNQGA) are compositionally biased toward polar residues. The Lipoxygenase domain maps to 47 to 617 (YTLPNNDPNQ…NPAVNPFFLS (571 aa)). Asn-60, Asn-91, Asn-106, Asn-116, and Asn-157 each carry an N-linked (GlcNAc...) asparagine glycan. His-290, His-294, His-478, and Asn-482 together coordinate Mn(2+). An N-linked (GlcNAc...) asparagine glycan is attached at Asn-513. Position 618 (Val-618) interacts with Mn(2+).

The protein belongs to the lipoxygenase family. The cofactor is Mn(2+). N- and O-glycosylated.

Its subcellular location is the secreted. It carries out the reaction (9Z,12Z)-octadecadienoate + O2 = (11S)-hydroperoxy-(9Z,12Z)-octadecadienoate. The enzyme catalyses (9Z,12Z)-octadecadienoate + O2 = (13R)-hydroperoxy-(9Z,11E)-octadecadienoate. The catalysed reaction is (9Z,12Z,15Z)-octadecatrienoate + O2 = (11S)-hydroperoxy-(9Z,12Z,15Z)-octadecatrienoate. It catalyses the reaction (9Z,12Z,15Z)-octadecatrienoate + O2 = (13R)-hydroperoxy-(9Z,11E,15Z)-octadecatrienoate. Its function is as follows. Lipoxygenase that metabolizes linoleic and alpha-linolenic acids to 11S- and 13R-hydroperoxy fatty acids. At the end of lipoxygenation, the intermediate product 11S-HPODE from linoleic acid is then transformed into 13R-HPODE as the final product. It also acts on alpha-linolenic acid producing 11S-HPOTrE and 13R-HPOTrE with subsequent transformation of 11S-HPOTrE to 13R-HPOTrE as the final product. Gamma-linolenic acid is a poor substrate. Oleate and arachidonate are not substrates. The chain is Manganese lipoxygenase from Gaeumannomyces tritici (Wheat and barley take-all root rot fungus).